The sequence spans 92 residues: Alpha-elapitoxin-As2a (92 aa).

A signal peptide spans 1–21; sequence MKTLLLTLVVVTIVCLDLGDG. Cystine bridges form between cysteine 24–cysteine 41, cysteine 34–cysteine 62, cysteine 47–cysteine 51, cysteine 66–cysteine 77, and cysteine 78–cysteine 83.

This sequence belongs to the three-finger toxin family. Long-chain subfamily. Type II alpha-neurotoxin sub-subfamily. As to expression, expressed by the venom gland.

The protein localises to the secreted. In terms of biological role, binds with high affinity to muscular (alpha-1/CHRNA1) and neuronal (alpha-7/CHRNA7) nicotinic acetylcholine receptor (nAChR) and inhibits acetylcholine from binding to the receptor, thereby impairing neuromuscular and neuronal transmission. This Austrelaps superbus (Lowland copperhead snake) protein is Alpha-elapitoxin-As2a.